The following is a 116-amino-acid chain: Flagellar transcriptional regulator FlhD (116 aa).

This sequence belongs to the FlhD family. As to quaternary structure, homodimer; disulfide-linked. Forms a heterohexamer composed of two FlhC and four FlhD subunits. Each FlhC binds a FlhD dimer, forming a heterotrimer, and a hexamer assembles by dimerization of two heterotrimers.

The protein localises to the cytoplasm. Its function is as follows. Functions in complex with FlhC as a master transcriptional regulator that regulates transcription of several flagellar and non-flagellar operons by binding to their promoter region. Activates expression of class 2 flagellar genes, including fliA, which is a flagellum-specific sigma factor that turns on the class 3 genes. Also regulates genes whose products function in a variety of physiological pathways. The protein is Flagellar transcriptional regulator FlhD of Serratia proteamaculans (strain 568).